The primary structure comprises 160 residues: Large ribosomal subunit protein uL22c (160 aa).

It belongs to the universal ribosomal protein uL22 family. Part of the 50S ribosomal subunit.

It localises to the plastid. It is found in the chloroplast. Its function is as follows. This protein binds specifically to 23S rRNA. The globular domain of the protein is located near the polypeptide exit tunnel on the outside of the subunit, while an extended beta-hairpin is found that lines the wall of the exit tunnel in the center of the 70S ribosome. In Lepidium virginicum (Virginia pepperweed), this protein is Large ribosomal subunit protein uL22c (rpl22).